The chain runs to 433 residues: Trigger factor (433 aa).

The region spanning 163–248 is the PPIase FKBP-type domain; the sequence is GDTVNIDFSG…VNEIKFKEVP (86 aa).

Belongs to the FKBP-type PPIase family. Tig subfamily.

It is found in the cytoplasm. The enzyme catalyses [protein]-peptidylproline (omega=180) = [protein]-peptidylproline (omega=0). In terms of biological role, involved in protein export. Acts as a chaperone by maintaining the newly synthesized protein in an open conformation. Functions as a peptidyl-prolyl cis-trans isomerase. This Staphylococcus aureus (strain COL) protein is Trigger factor.